A 413-amino-acid polypeptide reads, in one-letter code: Gamma-glutamyl phosphate reductase (413 aa).

The protein belongs to the gamma-glutamyl phosphate reductase family.

The protein localises to the cytoplasm. It catalyses the reaction L-glutamate 5-semialdehyde + phosphate + NADP(+) = L-glutamyl 5-phosphate + NADPH + H(+). It participates in amino-acid biosynthesis; L-proline biosynthesis; L-glutamate 5-semialdehyde from L-glutamate: step 2/2. Its function is as follows. Catalyzes the NADPH-dependent reduction of L-glutamate 5-phosphate into L-glutamate 5-semialdehyde and phosphate. The product spontaneously undergoes cyclization to form 1-pyrroline-5-carboxylate. The chain is Gamma-glutamyl phosphate reductase from Lactococcus lactis subsp. cremoris (strain SK11).